Reading from the N-terminus, the 307-residue chain is Dihydroorotate dehydrogenase A (fumarate) (307 aa).

Residues serine 21 and 46–47 (KT) contribute to the FMN site. Substrate-binding positions include lysine 46, 70–74 (NSVGL), and asparagine 130. Residue asparagine 130 coordinates FMN. Cysteine 133 (nucleophile) is an active-site residue. FMN contacts are provided by lysine 168 and isoleucine 194. 195–196 (NT) serves as a coordination point for substrate. FMN contacts are provided by residues glycine 220, 246-247 (GG), and 268-269 (GS).

Belongs to the dihydroorotate dehydrogenase family. Type 1 subfamily. Homodimer. Requires FMN as cofactor.

The protein localises to the cytoplasm. The catalysed reaction is (S)-dihydroorotate + fumarate = orotate + succinate. It participates in pyrimidine metabolism; UMP biosynthesis via de novo pathway. Functionally, catalyzes the conversion of dihydroorotate to orotate with fumarate as the electron acceptor. The protein is Dihydroorotate dehydrogenase A (fumarate) (pyrD) of Lactobacillus helveticus (strain DPC 4571).